The chain runs to 78 residues: Translational regulator CsrA (78 aa).

It belongs to the CsrA/RsmA family. As to quaternary structure, homodimer; the beta-strands of each monomer intercalate to form a hydrophobic core, while the alpha-helices form wings that extend away from the core.

It localises to the cytoplasm. Its function is as follows. A translational regulator that binds mRNA to regulate translation initiation and/or mRNA stability. Usually binds in the 5'-UTR at or near the Shine-Dalgarno sequence preventing ribosome-binding, thus repressing translation. Its main target seems to be the major flagellin gene, while its function is anatagonized by FliW. The sequence is that of Translational regulator CsrA from Oleidesulfovibrio alaskensis (strain ATCC BAA-1058 / DSM 17464 / G20) (Desulfovibrio alaskensis).